A 493-amino-acid chain; its full sequence is Cysteine sulfinic acid decarboxylase (493 aa).

Lys305 is modified (N6-(pyridoxal phosphate)lysine).

It belongs to the group II decarboxylase family. In terms of assembly, homodimer. Pyridoxal 5'-phosphate is required as a cofactor. In terms of tissue distribution, expressed in brain, liver and kidney.

The catalysed reaction is L-aspartate + H(+) = beta-alanine + CO2. It catalyses the reaction 3-sulfino-L-alanine + H(+) = hypotaurine + CO2. It carries out the reaction L-cysteate + H(+) = taurine + CO2. Its pathway is organosulfur biosynthesis; taurine biosynthesis; hypotaurine from L-cysteine: step 2/2. In terms of biological role, catalyzes the decarboxylation of L-aspartate, 3-sulfino-L-alanine (cysteine sulfinic acid), and L-cysteate to beta-alanine, hypotaurine and taurine, respectively. The preferred substrate is 3-sulfino-L-alanine. Does not exhibit any decarboxylation activity toward glutamate. The chain is Cysteine sulfinic acid decarboxylase (Csad) from Rattus norvegicus (Rat).